Here is a 370-residue protein sequence, read N- to C-terminus: Quinolinate synthase (370 aa).

Iminosuccinate contacts are provided by His-62 and Ser-83. Cys-128 is a binding site for [4Fe-4S] cluster. Residues 154–156 and Ser-171 contribute to the iminosuccinate site; that span reads YAN. Cys-215 serves as a coordination point for [4Fe-4S] cluster. Residues 241–243 and Thr-258 contribute to the iminosuccinate site; that span reads HPE. Cys-312 serves as a coordination point for [4Fe-4S] cluster.

The protein belongs to the quinolinate synthase family. Type 1 subfamily. [4Fe-4S] cluster is required as a cofactor.

It is found in the cytoplasm. It catalyses the reaction iminosuccinate + dihydroxyacetone phosphate = quinolinate + phosphate + 2 H2O + H(+). The protein operates within cofactor biosynthesis; NAD(+) biosynthesis; quinolinate from iminoaspartate: step 1/1. In terms of biological role, catalyzes the condensation of iminoaspartate with dihydroxyacetone phosphate to form quinolinate. This Neisseria meningitidis serogroup A / serotype 4A (strain DSM 15465 / Z2491) protein is Quinolinate synthase.